We begin with the raw amino-acid sequence, 517 residues long: MAMASALRRLSSSSNKPLQRLFNGGHLYSMSSLPSEAVYEKERPGVTWPKQLNAPLEVGDPEIADIIELEKARQWKGLELILSENFTSLSVMQAVGSVMTNKYSEGYPGARYYGGNEYIDMAETLCQKRALEAFRLDAAKWGVNVQPLSGSPANFHVYTALLKAHDRIMALDLPHGGHLSHGYQTDTKKISAVSIFFETMPYRLNESTGYIDYDQLEKSATLFRPKLIVAGASAYARLYDYARIRKVCDKQKAILLADMAHISGLVAAGVIPSPFDYADVVTTTTHKSLRGPRGAMIFFRKGVKEVNKQGKEVLYDYEDKINQAVFPGLQGGPHNHTITGLAVALKQATTAEYKAYQEQVMSNCAKFAETLVKSGYELVSGGTENHLVLVNLKNKGIDGSRVEKVLEAVHIAANKNTVPGDVSAMVPGGIRMGTPALTSRGFVEEDFAKVAYLFDLAVKLAVKIKGEAQGTKLKDFVAAMQSSAFQSEISKLRHDVEEYAKQFPTIGFEKETMKYKN.

The N-terminal 31 residues, 1–31 (MAMASALRRLSSSSNKPLQRLFNGGHLYSMS), are a transit peptide targeting the mitochondrion. Lys-287 carries the post-translational modification N6-(pyridoxal phosphate)lysine.

The protein belongs to the SHMT family. In terms of assembly, homotetramer. It depends on pyridoxal 5'-phosphate as a cofactor.

It is found in the mitochondrion. It catalyses the reaction (6R)-5,10-methylene-5,6,7,8-tetrahydrofolate + glycine + H2O = (6S)-5,6,7,8-tetrahydrofolate + L-serine. Its pathway is one-carbon metabolism; tetrahydrofolate interconversion. Its function is as follows. Catalyzes the interconversion of serine and glycine. The polypeptide is Serine hydroxymethyltransferase 2, mitochondrial (Flaveria pringlei).